The chain runs to 419 residues: N-acylglucosamine 2-epimerase (419 aa).

Residues L185–L206 form a leucine-zipper region. At S418 the chain carries Phosphoserine.

It belongs to the N-acylglucosamine 2-epimerase family. In terms of assembly, homodimer. Forms a heterodimer with renin and inhibits its activity.

The enzyme catalyses an N-acyl-D-glucosamine = an N-acyl-D-mannosamine. It functions in the pathway amino-sugar metabolism; N-acetylneuraminate degradation. Catalyzes the interconversion of N-acetylglucosamine to N-acetylmannosamine. Involved in the N-glycolylneuraminic acid (Neu5Gc) degradation pathway. The chain is N-acylglucosamine 2-epimerase (Renbp) from Mus musculus (Mouse).